Here is an 80-residue protein sequence, read N- to C-terminus: MSQEAILEKVRSIVAEQLSVDAGEVKPESNFQNDLGADSLDTVELVMALEEAFDIEIPDESAEGILTVGDAVKYIEDKQA.

The Carrier domain occupies 4–79; sequence EAILEKVRSI…DAVKYIEDKQ (76 aa). O-(pantetheine 4'-phosphoryl)serine is present on serine 39.

The protein belongs to the acyl carrier protein (ACP) family. In terms of processing, 4'-phosphopantetheine is transferred from CoA to a specific serine of apo-ACP by AcpS. This modification is essential for activity because fatty acids are bound in thioester linkage to the sulfhydryl of the prosthetic group.

Its subcellular location is the cytoplasm. It functions in the pathway lipid metabolism; fatty acid biosynthesis. Functionally, carrier of the growing fatty acid chain in fatty acid biosynthesis. The protein is Acyl carrier protein of Synechococcus sp. (strain CC9902).